The chain runs to 312 residues: Ribose-phosphate pyrophosphokinase (312 aa).

ATP-binding positions include 34-36 (DQE) and 93-94 (RQ). The Mg(2+) site is built by His127 and Asp167. Residue Lys191 is part of the active site. Residues Arg193, Asp217, and 221-225 (DSGGT) contribute to the D-ribose 5-phosphate site.

The protein belongs to the ribose-phosphate pyrophosphokinase family. Class I subfamily. As to quaternary structure, homohexamer. Mg(2+) is required as a cofactor.

Its subcellular location is the cytoplasm. It catalyses the reaction D-ribose 5-phosphate + ATP = 5-phospho-alpha-D-ribose 1-diphosphate + AMP + H(+). It functions in the pathway metabolic intermediate biosynthesis; 5-phospho-alpha-D-ribose 1-diphosphate biosynthesis; 5-phospho-alpha-D-ribose 1-diphosphate from D-ribose 5-phosphate (route I): step 1/1. Its function is as follows. Involved in the biosynthesis of the central metabolite phospho-alpha-D-ribosyl-1-pyrophosphate (PRPP) via the transfer of pyrophosphoryl group from ATP to 1-hydroxyl of ribose-5-phosphate (Rib-5-P). This chain is Ribose-phosphate pyrophosphokinase, found in Hyphomonas neptunium (strain ATCC 15444).